The primary structure comprises 169 residues: Transcription antitermination protein NusB (169 aa).

It belongs to the NusB family.

Functionally, involved in transcription antitermination. Required for transcription of ribosomal RNA (rRNA) genes. Binds specifically to the boxA antiterminator sequence of the ribosomal RNA (rrn) operons. This is Transcription antitermination protein NusB from Deinococcus geothermalis (strain DSM 11300 / CIP 105573 / AG-3a).